The sequence spans 393 residues: Pinosylvin synthase (393 aa).

57–60 (KFKR) lines the substrate pocket. Cys-167 is a catalytic residue. Substrate contacts are provided by residues Leu-270 and 308–310 (GGR).

It belongs to the thiolase-like superfamily. Chalcone/stilbene synthases family. As to quaternary structure, homodimer.

It is found in the cytoplasm. The catalysed reaction is (E)-cinnamoyl-CoA + 3 malonyl-CoA + 3 H(+) = (E)-pinosylvin + 4 CO2 + 4 CoA. The enzyme catalyses 3-phenylpropanoyl-CoA + 3 malonyl-CoA + 3 H(+) = dihydropinosylvin + 4 CO2 + 4 CoA. The protein operates within phytoalexin biosynthesis; hydropinosylvin biosynthesis. Catalyzes the production of pinosylvin from cinnamoyl-CoA and malonyl-CoA, and dihydropinosylvin from dihydrocinnamoyl-CoA. This Pinus sylvestris (Scotch pine) protein is Pinosylvin synthase.